The chain runs to 114 residues: Non-specific lipid-transfer protein 1 (114 aa).

A signal peptide spans 1 to 25; sequence MIKGLAITVVAVLAVVQLLARPSDA. 4 cysteine pairs are disulfide-bonded: Cys-29/Cys-76, Cys-39/Cys-53, Cys-54/Cys-99, and Cys-74/Cys-113.

The protein belongs to the plant LTP family. In terms of tissue distribution, expressed in seeds and, at very low levels, in pulp of fruit (at protein level).

Its function is as follows. Plant non-specific lipid-transfer proteins transfer phospholipids as well as galactolipids across membranes. May play a role in wax or cutin deposition in the cell walls of expanding epidermal cells and certain secretory tissues. This Actinidia chinensis var. chinensis (Chinese soft-hair kiwi) protein is Non-specific lipid-transfer protein 1.